A 122-amino-acid chain; its full sequence is Basic phospholipase A2 homolog (122 aa).

7 disulfide bridges follow: cysteine 26/cysteine 115, cysteine 28/cysteine 44, cysteine 43/cysteine 95, cysteine 49/cysteine 122, cysteine 50/cysteine 88, cysteine 57/cysteine 81, and cysteine 75/cysteine 86. Residues 105 to 117 form an important for membrane-damaging activities in eukaryotes and bacteria; heparin-binding region; the sequence is KRYMTYPNILCSS.

The protein belongs to the phospholipase A2 family. Group II subfamily. N49 sub-subfamily. As to expression, expressed by the venom gland.

Its subcellular location is the secreted. This is Basic phospholipase A2 homolog from Gloydius halys (Chinese water mocassin).